A 278-amino-acid polypeptide reads, in one-letter code: Pyrroline-5-carboxylate reductase (278 aa).

Belongs to the pyrroline-5-carboxylate reductase family.

It localises to the cytoplasm. The catalysed reaction is L-proline + NADP(+) = (S)-1-pyrroline-5-carboxylate + NADPH + 2 H(+). The enzyme catalyses L-proline + NAD(+) = (S)-1-pyrroline-5-carboxylate + NADH + 2 H(+). It participates in amino-acid biosynthesis; L-proline biosynthesis; L-proline from L-glutamate 5-semialdehyde: step 1/1. In Actinidia chinensis var. chinensis (Chinese soft-hair kiwi), this protein is Pyrroline-5-carboxylate reductase.